A 464-amino-acid polypeptide reads, in one-letter code: Soluble pyridine nucleotide transhydrogenase (464 aa).

Position 35–44 (35–44 (DSRRQVGGNC)) interacts with FAD.

The protein belongs to the class-I pyridine nucleotide-disulfide oxidoreductase family. FAD serves as cofactor.

It localises to the cytoplasm. It carries out the reaction NAD(+) + NADPH = NADH + NADP(+). In terms of biological role, conversion of NADPH, generated by peripheral catabolic pathways, to NADH, which can enter the respiratory chain for energy generation. The sequence is that of Soluble pyridine nucleotide transhydrogenase from Pseudomonas fluorescens (strain SBW25).